We begin with the raw amino-acid sequence, 689 residues long: Elongation factor G (689 aa).

The tr-type G domain maps to 8 to 282 (ERTRNIGIMA…AVVDYLPAPT (275 aa)). GTP-binding positions include 17–24 (AHIDAGKT), 81–85 (DTPGH), and 135–138 (NKMD).

This sequence belongs to the TRAFAC class translation factor GTPase superfamily. Classic translation factor GTPase family. EF-G/EF-2 subfamily.

The protein resides in the cytoplasm. Catalyzes the GTP-dependent ribosomal translocation step during translation elongation. During this step, the ribosome changes from the pre-translocational (PRE) to the post-translocational (POST) state as the newly formed A-site-bound peptidyl-tRNA and P-site-bound deacylated tRNA move to the P and E sites, respectively. Catalyzes the coordinated movement of the two tRNA molecules, the mRNA and conformational changes in the ribosome. The polypeptide is Elongation factor G (Desulforudis audaxviator (strain MP104C)).